We begin with the raw amino-acid sequence, 151 residues long: MEIKVESINNNFCKLSYEDIEIIMMKENEYINATRLCSSRGRDILDWMSKESSVELINELDRINRSCNDYYDYRGIVLNVVSDSETSELYVHRDLILHISHWISPLFSLKVVKFINSYIQDSYQLEYELIHKKSLMDQLKEIILLNDDNNM.

One can recognise a KilA-N domain in the interval 11 to 118 (NFCKLSYEDI…LKVVKFINSY (108 aa)).

This is an uncharacterized protein from Fowlpox virus (strain NVSL) (FPV).